The chain runs to 234 residues: GTP:AMP phosphotransferase, mitochondrial (234 aa).

Residue 24 to 29 participates in GTP binding; it reads GSGKGT. Positions 45-74 are NMP; that stretch reads SSGDILRQEIKSESTLGREATTYIAQGKLL. Residues Ser-46, Arg-51, 72–74, 103–106, and Gln-110 contribute to the AMP site; these read KLL and GFPR. The interval 144–181 is LID; the sequence is NRYVHVPSGRVYNLQYNPPKVPGLDDITGEPLTKRLDD. GTP contacts are provided by residues Arg-145 and 154–155; that span reads VY. AMP contacts are provided by Arg-178 and Arg-189. Position 218 (Ser-218) interacts with GTP.

This sequence belongs to the adenylate kinase family. AK3 subfamily. In terms of assembly, monomer.

The protein resides in the mitochondrion matrix. The enzyme catalyses a ribonucleoside 5'-triphosphate + AMP = a ribonucleoside 5'-diphosphate + ADP. Involved in maintaining the homeostasis of cellular nucleotides by catalyzing the interconversion of nucleoside phosphates. Has GTP:AMP phosphotransferase and ITP:AMP phosphotransferase activities. Does not accept ATP as phosphate donor. In Saccharomyces cerevisiae (Baker's yeast), this protein is GTP:AMP phosphotransferase, mitochondrial.